A 133-amino-acid polypeptide reads, in one-letter code: Small ribosomal subunit protein uS19 (133 aa).

This sequence belongs to the universal ribosomal protein uS19 family.

Protein S19 forms a complex with S13 that binds strongly to the 16S ribosomal RNA. This Thermococcus gammatolerans (strain DSM 15229 / JCM 11827 / EJ3) protein is Small ribosomal subunit protein uS19.